The sequence spans 301 residues: Homoserine O-acetyltransferase (301 aa).

Cys142 functions as the Acyl-thioester intermediate in the catalytic mechanism. Substrate is bound by residues Lys163 and Ser192. Catalysis depends on His235, which acts as the Proton acceptor. Glu237 is a catalytic residue. A substrate-binding site is contributed by Arg249.

This sequence belongs to the MetA family.

It localises to the cytoplasm. The catalysed reaction is L-homoserine + acetyl-CoA = O-acetyl-L-homoserine + CoA. Its pathway is amino-acid biosynthesis; L-methionine biosynthesis via de novo pathway; O-acetyl-L-homoserine from L-homoserine: step 1/1. Its function is as follows. Transfers an acetyl group from acetyl-CoA to L-homoserine, forming acetyl-L-homoserine. The sequence is that of Homoserine O-acetyltransferase from Lachnoclostridium phytofermentans (strain ATCC 700394 / DSM 18823 / ISDg) (Clostridium phytofermentans).